The chain runs to 53 residues: Sec-independent protein translocase protein TatA (53 aa).

The helical transmembrane segment at 1-21 (MGMSFSHLLIVLLIIFVLFGA) threads the bilayer.

Belongs to the TatA/E family. The Tat system comprises two distinct complexes: a TatABC complex, containing multiple copies of TatA, TatB and TatC subunits, and a separate TatA complex, containing only TatA subunits. Substrates initially bind to the TatABC complex, which probably triggers association of the separate TatA complex to form the active translocon.

Its subcellular location is the cell inner membrane. Part of the twin-arginine translocation (Tat) system that transports large folded proteins containing a characteristic twin-arginine motif in their signal peptide across membranes. TatA could form the protein-conducting channel of the Tat system. In Rickettsia typhi (strain ATCC VR-144 / Wilmington), this protein is Sec-independent protein translocase protein TatA.